We begin with the raw amino-acid sequence, 149 residues long: Large ribosomal subunit protein uL11 (149 aa).

The protein belongs to the universal ribosomal protein uL11 family. As to quaternary structure, part of the ribosomal stalk of the 50S ribosomal subunit. Interacts with L10 and the large rRNA to form the base of the stalk. L10 forms an elongated spine to which L12 dimers bind in a sequential fashion forming a multimeric L10(L12)X complex. Post-translationally, one or more lysine residues are methylated.

Forms part of the ribosomal stalk which helps the ribosome interact with GTP-bound translation factors. This Xanthobacter autotrophicus (strain ATCC BAA-1158 / Py2) protein is Large ribosomal subunit protein uL11.